The primary structure comprises 298 residues: Aspartate carbamoyltransferase catalytic subunit (298 aa).

The carbamoyl phosphate site is built by Arg-50 and Thr-51. Lys-79 is an L-aspartate binding site. The carbamoyl phosphate site is built by Arg-100, His-128, and Gln-131. L-aspartate contacts are provided by Arg-161 and Arg-220. Carbamoyl phosphate is bound by residues Leu-259 and Pro-260.

This sequence belongs to the aspartate/ornithine carbamoyltransferase superfamily. ATCase family. Heterooligomer of catalytic and regulatory chains.

The catalysed reaction is carbamoyl phosphate + L-aspartate = N-carbamoyl-L-aspartate + phosphate + H(+). It functions in the pathway pyrimidine metabolism; UMP biosynthesis via de novo pathway; (S)-dihydroorotate from bicarbonate: step 2/3. Functionally, catalyzes the condensation of carbamoyl phosphate and aspartate to form carbamoyl aspartate and inorganic phosphate, the committed step in the de novo pyrimidine nucleotide biosynthesis pathway. In Sulfurisphaera tokodaii (strain DSM 16993 / JCM 10545 / NBRC 100140 / 7) (Sulfolobus tokodaii), this protein is Aspartate carbamoyltransferase catalytic subunit.